Reading from the N-terminus, the 460-residue chain is Tubby-related protein 3 (460 aa).

Disordered regions lie at residues 37 to 132 and 151 to 193; these read KKQR…ETAP and YDEE…GVTA. The segment covering 151–162 has biased composition (acidic residues); the sequence is YDEEPDKEEDEG. Low complexity predominate over residues 166–188; sequence SSPSARSEESAAASQKAASETGA.

Belongs to the TUB family. Associates with the IFT complex A (IFT-A). Interacts with SIRT1. In terms of tissue distribution, widely expressed including eyes and adipose depots.

The protein resides in the nucleus. Its subcellular location is the cell membrane. It is found in the cell projection. It localises to the cilium. The protein localises to the cytoplasm. The protein resides in the secreted. In terms of biological role, negative regulator of the Shh signaling transduction pathway: recruited to primary cilia via association with the IFT complex A (IFT-A) and is required for recruitment of G protein-coupled receptor GPR161 to cilia, a promoter of PKA-dependent basal repression machinery in Shh signaling. Binds to phosphorylated inositide (phosphoinositide) lipids. Both IFT-A- and phosphoinositide-binding properties are required to regulate ciliary G protein-coupled receptor trafficking. During adipogenesis, regulates ciliary trafficking of FFAR4 in preadipocytes. This chain is Tubby-related protein 3, found in Mus musculus (Mouse).